A 274-amino-acid polypeptide reads, in one-letter code: Small ribosomal subunit protein uS3 (274 aa).

Residues 38-106 enclose the KH type-2 domain; it reads IRRLLSSGLE…QVQLNILEVK (69 aa). A disordered region spans residues 215 to 274; the sequence is AAAAPAGADRPRRERPSGTRPRRSGASGTTATGTDAGRAAGGEEAAPDAAAPVEAQSTES. The span at 238-266 shows a compositional bias: low complexity; that stretch reads SGASGTTATGTDAGRAAGGEEAAPDAAAP.

This sequence belongs to the universal ribosomal protein uS3 family. In terms of assembly, part of the 30S ribosomal subunit. Forms a tight complex with proteins S10 and S14.

Binds the lower part of the 30S subunit head. Binds mRNA in the 70S ribosome, positioning it for translation. This Mycobacterium tuberculosis (strain ATCC 25177 / H37Ra) protein is Small ribosomal subunit protein uS3.